Here is a 187-residue protein sequence, read N- to C-terminus: MTTGTFDMSDLKRRMQGAVGVLRDELGGLRTGRASASLLDPITIEAYGARMPLNQVATVSVPEARLLSVQVWDRGMVSAVEKAIRDSNLGLNPNTEGQVLRLRIPELNQERRQELVKVAHKYAEAAKVAVRHVRRDGMDHLKKVEKDGEMSSDDLDRLSKDVQKATDETIAEIDQTLAQKEKEILSV.

Belongs to the RRF family.

It is found in the cytoplasm. Functionally, responsible for the release of ribosomes from messenger RNA at the termination of protein biosynthesis. May increase the efficiency of translation by recycling ribosomes from one round of translation to another. In Xanthobacter autotrophicus (strain ATCC BAA-1158 / Py2), this protein is Ribosome-recycling factor.